The chain runs to 1512 residues: Lysophospholipase NTE1 (1512 aa).

Over 1–48 (MAAPDAMTSLVKSSVALLSSAHESLPTSLAAMKTAETAPSSTFGILGR) the chain is Cytoplasmic. Residues 49–69 (VILSILSVLPTLLFWVSYTLP) form a helical membrane-spanning segment. Over 70–83 (TWLFTLFSMSLTFT) the chain is Lumenal. Residues 84-104 (MNFTTLMLVLVFVVSTISYFV) traverse the membrane as a helical segment. Residues 105-1512 (RYRYLTMYAR…RTMAPRRASI (1408 aa)) lie on the Cytoplasmic side of the membrane. Disordered regions lie at residues 204–230 (NREE…QAHR), 262–362 (RHDE…AHPD), 534–556 (TQMS…QHDV), and 740–770 (TEDD…KRSR). Positions 208–217 (SDSDEDDGEL) are enriched in acidic residues. Polar residues predominate over residues 268-291 (GPSSSTPMSPQHRPSMTRNSSFNM). A compositionally biased stretch (basic residues) spans 343–358 (HSKQRRSPSRSTKPKS). Over residues 537–549 (SRGTGRSGRSSFS) the composition is skewed to low complexity. Residues 669–793 (LSAS…SNRS) and 830–950 (RLTT…IASR) contribute to the a nucleoside 3',5'-cyclic phosphate site. Polar residues predominate over residues 751–761 (PTATNTSLRNG). The 165-residue stretch at 1209–1373 (LVLGGGGARG…IDNLTVAHMK (165 aa)) folds into the PNPLA domain. Positions 1213-1218 (GGGARG) match the GXGXXG motif. A GXSXG motif is present at residues 1240-1244 (GTSIG). Catalysis depends on Ser1242, which acts as the Nucleophile. Asp1360 (proton acceptor) is an active-site residue. The short motif at 1360–1362 (DGG) is the DGA/G element.

The protein belongs to the NTE family.

Its subcellular location is the endoplasmic reticulum membrane. It carries out the reaction a 1-acyl-sn-glycero-3-phosphocholine + H2O = sn-glycerol 3-phosphocholine + a fatty acid + H(+). Its activity is regulated as follows. Inhibited by organophosphorus esters. Its function is as follows. Intracellular phospholipase B that catalyzes the double deacylation of phosphatidylcholine (PC) to glycerophosphocholine (GroPCho). Plays an important role in membrane lipid homeostasis. Responsible for the rapid PC turnover in response to inositol, elevated temperatures, or when choline is present in the growth medium. This Phaeosphaeria nodorum (strain SN15 / ATCC MYA-4574 / FGSC 10173) (Glume blotch fungus) protein is Lysophospholipase NTE1 (NTE1).